We begin with the raw amino-acid sequence, 319 residues long: Annexin A4 (319 aa).

A Phosphothreonine modification is found at T7. Phosphoserine is present on S12. 4 Annexin repeats span residues 14-85 (FNAT…GLMT), 86-157 (PTVL…SLSA), 169-241 (ALMK…AIVK), and 245-316 (SKPS…VLCG). An N6-acetyllysine mark is found at K213, K293, and K300.

This sequence belongs to the annexin family.

Its subcellular location is the zymogen granule membrane. Calcium/phospholipid-binding protein which promotes membrane fusion and is involved in exocytosis. In Mus musculus (Mouse), this protein is Annexin A4 (Anxa4).